A 385-amino-acid chain; its full sequence is S-type anion channel SLAH1 (385 aa).

At 1–42 (MEIPRQEIHIEIDNSIPSSKEFKTGLADAKPVVLMSALRSLH) the chain is on the cytoplasmic side. The chain crosses the membrane as a helical span at residues 43-65 (AGYFRISLSLCSQALLWKIMIAP). The Extracellular portion of the chain corresponds to 66 to 81 (ESPSMSHMHSKLPSMA). The helical transmembrane segment at 82–102 (FHLLWYLALVTQVSLCFLYAL) threads the bilayer. Residues 103 to 114 (KCIFFFDKVKEE) lie on the Cytoplasmic side of the membrane. The chain crosses the membrane as a helical span at residues 115–135 (FLHYIGVNYLYAPSISWLLML). The Extracellular segment spans residues 136 to 150 (QSAPMMEPNSVLYQT). The chain crosses the membrane as a helical span at residues 151 to 171 (LFWIFAVPVLTLDIKLYGQWF). Over 172-176 (TTEKR) the chain is Cytoplasmic. The chain crosses the membrane as a helical span at residues 177–197 (FLSMLANPASQVSVIANLVAA). Over 198–207 (RGAAEMGWNE) the chain is Extracellular. The chain crosses the membrane as a helical span at residues 208-228 (CALCMFSLGMVHYLVIFVTLY). Over 229-243 (QRLPGGNNFPAKLRP) the chain is Cytoplasmic. A helical transmembrane segment spans residues 244 to 264 (IFFLFVAAPAMASLAWNSICG). Position 265 (threonine 265) is a topological domain, extracellular. Residues 266 to 286 (FDAVAKMLFFLSLFIFMSLVC) traverse the membrane as a helical segment. The Cytoplasmic portion of the chain corresponds to 287 to 299 (RPNLFKKSMKRFN). The helical transmembrane segment at 300–320 (VAWWAYSFPLTFLALDSVQYA) threads the bilayer. Residues 321–330 (QEVKDPVGSG) lie on the Extracellular side of the membrane. Residues 331–351 (LMLIFSSISVLIFLGMMVLTA) form a helical membrane-spanning segment. Over 352 to 385 (ANSNRLLRHDPVLGSATDPKDKQKTLSLNATNQN) the chain is Cytoplasmic. The tract at residues 366 to 385 (SATDPKDKQKTLSLNATNQN) is disordered. Residues 376-385 (TLSLNATNQN) show a composition bias toward polar residues.

This sequence belongs to the SLAC1 S-type anion channel family. As to quaternary structure, homotrimer. In terms of tissue distribution, expressed in the vascular systems of root.

The protein resides in the cell membrane. In terms of biological role, slow, weak voltage-dependent S-type anion efflux channel involved in maintenance of anion homeostasis. In Arabidopsis thaliana (Mouse-ear cress), this protein is S-type anion channel SLAH1 (SLAH1).